The following is a 192-amino-acid chain: Succinate dehydrogenase cytochrome b560 subunit, mitochondrial (192 aa).

A mitochondrion-targeting transit peptide spans 1 to 27 (MFGRTLNTFTSRNAPLVRNFDKFIVNN). Residues 48-83 (YSTQAKKPFTITEKRIDELKTPYQPTSPHLTIYKFP) are Mitochondrial matrix-facing. Residues 84 to 113 (LPAVMSIMHRATGICLALGITGLAGVTLFA) traverse the membrane as a helical segment. At 114–131 (PHDAIHYIQLLHTQYPAL) the chain is on the mitochondrial intermembrane side. The helical transmembrane segment at 132 to 156 (VYPAKFAVALPLTYHFCTGVRHIIW) threads the bilayer. A heme b-binding site is contributed by H146. The Mitochondrial matrix segment spans residues 157 to 164 (DETVKGLS). The helical transmembrane segment at 165–186 (ISQIESSGKVLLAVVAVLSTIF) threads the bilayer. At 187 to 189 (TFV) the chain is on the mitochondrial intermembrane side.

The protein belongs to the cytochrome b560 family. As to quaternary structure, component of complex II composed of four subunits: the flavoprotein (FP) sdha, iron-sulfur protein (IP) sdhb, and a cytochrome b560 composed of sdhc and sdhd. Heme b is required as a cofactor.

Its subcellular location is the mitochondrion inner membrane. Its pathway is carbohydrate metabolism; tricarboxylic acid cycle. Functionally, membrane-anchoring subunit of succinate dehydrogenase (SDH) that is involved in complex II of the mitochondrial electron transport chain and is responsible for transferring electrons from succinate to ubiquinone (coenzyme Q). This Dictyostelium discoideum (Social amoeba) protein is Succinate dehydrogenase cytochrome b560 subunit, mitochondrial (sdhC).